Here is a 352-residue protein sequence, read N- to C-terminus: Putative GATA transcription factor 22 (352 aa).

Residues 27–53 are disordered; it reads SLHHHLQQQQQQQQHFHHQASSNPSSL. Positions 33–53 are enriched in low complexity; it reads QQQQQQQQHFHHQASSNPSSL. Positions 112–119 match the Nuclear localization signal motif; sequence PKKETRLK. A disordered region spans residues 163–189; that stretch reads AIITTSDSSKQHTNNDQSSNLSNSERQ. The span at 165–189 shows a compositional bias: polar residues; the sequence is ITTSDSSKQHTNNDQSSNLSNSERQ. A GATA-type zinc finger spans residues 195 to 249; it reads DCVIRICSDCNTTKTPLWRSGPRGPKSLCNACGIRQRKARRAAMATATATAVSGV.

It belongs to the type IV zinc-finger family. Class B subfamily. As to quaternary structure, forms heterodimers with GATA18. In terms of tissue distribution, expressed predominantly in leaves, and barely in stems, flowers and siliques.

It is found in the nucleus. In terms of biological role, transcriptional regulator that specifically binds 5'-GATA-3' or 5'-GAT-3' motifs within gene promoters. Involved in the modulation of chloroplast development, growth and division in a cytokinin-dependent manner. Repressor of the gibberellic acid (GA) signaling pathway that regulates flowering and modulates greening, in a SOC1-dependent manner. Prevents the accumulation of SOC1 during flowering. Promotes chlorophyll biosynthesis throughout the plant, by regulating chlorophyll biosynthetic genes (e.g. HEMA1 and GUN4) and chloroplast localized glutamate synthase (e.g. GLU1). Involved in the regulation of sugar-sensing genes (e.g. HXK1, HXK2, STP13 and PLT6). Regulator of germination, senescence, elongation growth and flowering time. Influences also leaf starch content. This chain is Putative GATA transcription factor 22, found in Arabidopsis thaliana (Mouse-ear cress).